A 436-amino-acid chain; its full sequence is Mitochondrial distribution and morphology protein 12 (436 aa).

Residues 1–436 form the SMP-LTD domain; sequence MSIEVNWGTA…VFPSFYTFLI (436 aa). A compositionally biased stretch (acidic residues) spans 73 to 84; that stretch reads DEDGDSGSEISE. 3 disordered regions span residues 73–98, 184–275, and 352–380; these read DEDG…WDRT, AVAG…RMRE, and GSGS…PHQK. Positions 85–98 are enriched in basic and acidic residues; it reads ELQHRTHDNPWDRT. Composition is skewed to polar residues over residues 190–206 and 222–243; these read PFTT…QGNK and DSSN…SNRS. The span at 244–255 shows a compositional bias: basic and acidic residues; the sequence is SHPDGHPEHNDD. Polar residues predominate over residues 256–267; sequence PISSSENPLLQN.

This sequence belongs to the MDM12 family. As to quaternary structure, component of the ER-mitochondria encounter structure (ERMES) or MDM complex, composed of mmm1, mdm10, mdm12 and mdm34. A mmm1 homodimer associates with one molecule of mdm12 on each side in a pairwise head-to-tail manner, and the SMP-LTD domains of mmm1 and mdm12 generate a continuous hydrophobic tunnel for phospholipid trafficking.

It localises to the mitochondrion outer membrane. It is found in the endoplasmic reticulum membrane. Component of the ERMES/MDM complex, which serves as a molecular tether to connect the endoplasmic reticulum (ER) and mitochondria. Components of this complex are involved in the control of mitochondrial shape and protein biogenesis, and function in nonvesicular lipid trafficking between the ER and mitochondria. Mdm12 is required for the interaction of the ER-resident membrane protein mmm1 and the outer mitochondrial membrane-resident beta-barrel protein mdm10. The mdm12-mmm1 subcomplex functions in the major beta-barrel assembly pathway that is responsible for biogenesis of all mitochondrial outer membrane beta-barrel proteins, and acts in a late step after the SAM complex. The mdm10-mdm12-mmm1 subcomplex further acts in the TOM40-specific pathway after the action of the mdm12-mmm1 complex. Essential for establishing and maintaining the structure of mitochondria and maintenance of mtDNA nucleoids. The protein is Mitochondrial distribution and morphology protein 12 of Emericella nidulans (strain FGSC A4 / ATCC 38163 / CBS 112.46 / NRRL 194 / M139) (Aspergillus nidulans).